The chain runs to 339 residues: Beta-ketoacyl-[acyl-carrier-protein] synthase III (339 aa).

Active-site residues include Cys121 and His257. Positions 258–262 are ACP-binding; sequence QANLR. The active site involves Asn288.

It belongs to the thiolase-like superfamily. FabH family. Homodimer.

Its subcellular location is the cytoplasm. It carries out the reaction malonyl-[ACP] + propanoyl-CoA + H(+) = 3-oxopentanoyl-[ACP] + CO2 + CoA. The enzyme catalyses 2-methylpropanoyl-CoA + malonyl-[ACP] + H(+) = 4-methyl-3-oxopentanoyl-[ACP] + CO2 + CoA. The catalysed reaction is malonyl-[ACP] + acetyl-CoA + H(+) = 3-oxobutanoyl-[ACP] + CO2 + CoA. It catalyses the reaction butanoyl-CoA + malonyl-[ACP] + H(+) = 3-oxohexanoyl-[ACP] + CO2 + CoA. Its pathway is lipid metabolism; fatty acid biosynthesis. Its function is as follows. Catalyzes the condensation reaction of fatty acid synthesis by the addition to an acyl acceptor of two carbons from malonyl-ACP. Catalyzes the first condensation reaction which initiates fatty acid synthesis and may therefore play a role in governing the total rate of fatty acid production. Possesses both acetoacetyl-ACP synthase and acetyl transacylase activities. Propionyl-CoA and isobutyryl-CoA were the two most preferred substrates, although acetyl-CoA and butyryl-CoA could also be accepted and elongated. Involved in the biosynthesis of R1128 polyketide. This Streptomyces lividans protein is Beta-ketoacyl-[acyl-carrier-protein] synthase III.